Here is a 936-residue protein sequence, read N- to C-terminus: Protocadherin gamma-A10 (936 aa).

Positions 1–32 are cleaved as a signal peptide; it reads MAAQRNRSKESKDCSGLVLLCLFFGIPWEAGA. Cadherin domains follow at residues 33–137, 138–246, 247–351, 352–456, 457–566, and 574–687; these read RQIS…APKF, QAEN…APVF, TLPE…SPEL, TITS…PPTF, SQVS…APEI, and DGST…SPAN. The Extracellular segment spans residues 33 to 696; the sequence is RQISYSIPEE…NSETSDLTLY (664 aa). Asn-51 is a glycosylation site (N-linked (GlcNAc...) asparagine). 2 N-linked (GlcNAc...) asparagine glycosylation sites follow: Asn-423 and Asn-549. A helical transmembrane segment spans residues 697–717; the sequence is LVVAVAAVSCVFLAFVIVLLA. Residues 718-936 lie on the Cytoplasmic side of the membrane; that stretch reads HRLRRWHKSR…KKKSGKKEKK (219 aa). Disordered stretches follow at residues 806 to 845 and 906 to 936; these read EDTP…WPNN and ATLT…KEKK. The segment covering 820-845 has biased composition (polar residues); the sequence is WRFSQAQRPGTSGSQNGDDTGTWPNN. The segment covering 926-936 has biased composition (basic residues); that stretch reads NKKKSGKKEKK.

The protein resides in the cell membrane. Potential calcium-dependent cell-adhesion protein. May be involved in the establishment and maintenance of specific neuronal connections in the brain. The chain is Protocadherin gamma-A10 (PCDHGA10) from Homo sapiens (Human).